A 902-amino-acid chain; its full sequence is HTH-type transcriptional regulator MalT (902 aa).

39 to 46 provides a ligand contact to ATP; the sequence is SPAGYGKT. In terms of domain architecture, HTH luxR-type spans 830–895; it reads ELIRTSPLTQ…DAVQHAQQLL (66 aa). A DNA-binding region (H-T-H motif) is located at residues 854–873; that stretch reads NEQIAGELAVAATTIKTHIR.

Belongs to the MalT family. In terms of assembly, monomer in solution. Oligomerizes to an active state in the presence of the positive effectors ATP and maltotriose.

Its activity is regulated as follows. Activated by ATP and maltotriose, which are both required for DNA binding. Functionally, positively regulates the transcription of the maltose regulon whose gene products are responsible for uptake and catabolism of malto-oligosaccharides. Specifically binds to the promoter region of its target genes, recognizing a short DNA motif called the MalT box. The sequence is that of HTH-type transcriptional regulator MalT from Salmonella dublin (strain CT_02021853).